Here is a 463-residue protein sequence, read N- to C-terminus: tRNA modification GTPase MnmE (463 aa).

Residues Arg-27, Glu-92, and Lys-131 each contribute to the (6S)-5-formyl-5,6,7,8-tetrahydrofolate site. Residues 234–386 enclose the TrmE-type G domain; sequence GIKLAIVGKP…LEDHLLKIYS (153 aa). Asn-244 is a binding site for K(+). GTP contacts are provided by residues 244–249, 263–269, and 288–291; these read NVGKSS, TNVAGTT, and DTAG. Ser-248 provides a ligand contact to Mg(2+). 3 residues coordinate K(+): Thr-263, Val-265, and Thr-268. Thr-269 contacts Mg(2+). Lys-463 provides a ligand contact to (6S)-5-formyl-5,6,7,8-tetrahydrofolate.

Belongs to the TRAFAC class TrmE-Era-EngA-EngB-Septin-like GTPase superfamily. TrmE GTPase family. Homodimer. Heterotetramer of two MnmE and two MnmG subunits. K(+) is required as a cofactor.

It is found in the cytoplasm. Its function is as follows. Exhibits a very high intrinsic GTPase hydrolysis rate. Involved in the addition of a carboxymethylaminomethyl (cmnm) group at the wobble position (U34) of certain tRNAs, forming tRNA-cmnm(5)s(2)U34. This Mycoplasmopsis synoviae (strain 53) (Mycoplasma synoviae) protein is tRNA modification GTPase MnmE.